The primary structure comprises 342 residues: Foldase protein PrsA (342 aa).

The first 22 residues, 1-22 (MVSVKKIVASALVGVLMFSAVG), serve as a signal peptide directing secretion. The N-palmitoyl cysteine moiety is linked to residue C23. C23 is lipidated: S-diacylglycerol cysteine. Residues 189 to 284 (DSGVLTKHLL…FGYHIIQAGA (96 aa)) form the PpiC domain.

It belongs to the PrsA family.

The protein resides in the cell membrane. The catalysed reaction is [protein]-peptidylproline (omega=180) = [protein]-peptidylproline (omega=0). Its function is as follows. Plays a major role in protein secretion by helping the post-translocational extracellular folding of several secreted proteins. This is Foldase protein PrsA from Clostridium perfringens (strain 13 / Type A).